A 523-amino-acid polypeptide reads, in one-letter code: ATP synthase subunit alpha (523 aa).

179–186 provides a ligand contact to ATP; sequence GDRQTGKT.

The protein belongs to the ATPase alpha/beta chains family. As to quaternary structure, F-type ATPases have 2 components, CF(1) - the catalytic core - and CF(0) - the membrane proton channel. CF(1) has five subunits: alpha(3), beta(3), gamma(1), delta(1), epsilon(1). CF(0) has three main subunits: a(1), b(2) and c(9-12). The alpha and beta chains form an alternating ring which encloses part of the gamma chain. CF(1) is attached to CF(0) by a central stalk formed by the gamma and epsilon chains, while a peripheral stalk is formed by the delta and b chains.

It localises to the cell inner membrane. The enzyme catalyses ATP + H2O + 4 H(+)(in) = ADP + phosphate + 5 H(+)(out). Functionally, produces ATP from ADP in the presence of a proton gradient across the membrane. The alpha chain is a regulatory subunit. The sequence is that of ATP synthase subunit alpha from Vibrio parahaemolyticus serotype O3:K6 (strain RIMD 2210633).